Here is a 244-residue protein sequence, read N- to C-terminus: Protein crossbronx (244 aa).

The UBC core domain maps to 20–176; it reads QQEYKILAEY…VLENIKESKE (157 aa).

The protein belongs to the ubiquitin-conjugating enzyme family. FTS subfamily.

This Drosophila persimilis (Fruit fly) protein is Protein crossbronx (cbx).